A 284-amino-acid polypeptide reads, in one-letter code: Pantothenate synthetase (284 aa).

ATP is bound at residue 30-37; that stretch reads MGNLHDGH. The Proton donor role is filled by His37. Position 61 (Gln61) interacts with (R)-pantoate. Residue Gln61 participates in beta-alanine binding. Position 149-152 (149-152) interacts with ATP; that stretch reads GEKD. Position 155 (Gln155) interacts with (R)-pantoate. ATP contacts are provided by residues Val178 and 186–189; that span reads LSSR.

This sequence belongs to the pantothenate synthetase family. In terms of assembly, homodimer.

It is found in the cytoplasm. It carries out the reaction (R)-pantoate + beta-alanine + ATP = (R)-pantothenate + AMP + diphosphate + H(+). The protein operates within cofactor biosynthesis; (R)-pantothenate biosynthesis; (R)-pantothenate from (R)-pantoate and beta-alanine: step 1/1. In terms of biological role, catalyzes the condensation of pantoate with beta-alanine in an ATP-dependent reaction via a pantoyl-adenylate intermediate. This Photorhabdus laumondii subsp. laumondii (strain DSM 15139 / CIP 105565 / TT01) (Photorhabdus luminescens subsp. laumondii) protein is Pantothenate synthetase.